Consider the following 239-residue polypeptide: Serine protease SplF (239 aa).

The first 36 residues, 1-36, serve as a signal peptide directing secretion; it reads MNKNIIIKSIAALTILTSITGVGTTMVEGIQQTAKA. Catalysis depends on charge relay system residues His75, Asp114, and Ser192.

This sequence belongs to the peptidase S1B family.

It is found in the secreted. The sequence is that of Serine protease SplF (splF) from Staphylococcus aureus (strain NCTC 8325 / PS 47).